Reading from the N-terminus, the 562-residue chain is Sperm-tail PG-rich repeat-containing protein 2 (562 aa).

3 STPGR repeats span residues 21–31 (GPGTYNINRSL), 60–73 (SPGP…ITRN), and 96–118 (PGPG…AKSP). 2 disordered regions span residues 114–136 (KAKS…APSI) and 192–215 (SGRR…QEDQ). The span at 127 to 136 (PSLSPAAPSI) shows a compositional bias: low complexity. The segment covering 193–202 (GRREPLKGAD) has biased composition (basic and acidic residues). STPGR repeat units lie at residues 204-227 (PGPG…VKRE), 253-271 (PGPG…SNTH), 336-350 (TPGP…YGLA), 385-409 (TPGP…TAAF), 425-462 (TPPP…SCFL), and 478-492 (TPGP…KSSS). Residues 543–562 (STRSLSSHRSWRKPTAHSSA) form a disordered region. Residues 551–562 (RSWRKPTAHSSA) are compositionally biased toward basic residues.

The sequence is that of Sperm-tail PG-rich repeat-containing protein 2 (stpg2) from Danio rerio (Zebrafish).